We begin with the raw amino-acid sequence, 225 residues long: MSFAEEVNREEWMEKIGKLRFQRAEMNRLIMDYLVTEGYKEAAEKFRIESGTQPTAPLDSLDDRIKIREAVQKGDLEQAVSMTNKLNPDILDSNQQLYFHLQQQRLIELIREKDIEAAVEFAQGQFSEQGQESGRYLEELEQTMALLAFDNPEESPFGDLLHTSQRQKVASELNAAILEAEHKKTQPKLANVLKLLLWAQDELEGKKVKFPKMAEIASGTFEESR.

Residues 22–54 (QRAEMNRLIMDYLVTEGYKEAAEKFRIESGTQP) form the LisH domain. Residues 60–117 (SLDDRIKIREAVQKGDLEQAVSMTNKLNPDILDSNQQLYFHLQQQRLIELIREKDIEA) form the CTLH domain.

Belongs to the GID8 family.

Its subcellular location is the cytoplasm. The protein localises to the nucleus. In terms of biological role, core component of the CTLH E3 ubiquitin-protein ligase complex that mediates ubiquitination and subsequent proteasomal degradation of target proteins. Acts as a positive regulator of Wnt signaling pathway by promoting beta-catenin (CTNNB1) nuclear accumulation. The chain is Glucose-induced degradation protein 8 homolog from Nematostella vectensis (Starlet sea anemone).